We begin with the raw amino-acid sequence, 471 residues long: NADH-quinone oxidoreductase subunit N 1 (471 aa).

The next 14 helical transmembrane spans lie at 11-31, 39-59, 81-101, 105-125, 127-147, 162-182, 200-220, 234-254, 270-290, 296-316, 324-344, 365-385, 398-418, and 444-464; these read ALVPEITLLVSAVTGLLAGAW, TIHVLAALATVVGLVATALAA, AIVLVAVLALIALSRDTVAGH, TEFVVLLQLGALGSIALAGAG, LIMLFAAFLLASVPFYALAGW, LAGALAGVTTAAGVTILFGVA, AAAAVGLIAVLAGLAFKAGAV, PPPVAAALTTVPKIGALVAFY, LITAVLATAGMTLGNLAAFAQ, MLGYSTVSQVGYLLMAVAVAG, ALLLYLAAYALTNIAGFAVVA, ALALTVALLGLVGTPPTAVFV, GLAWLVVIAALNTLASLFYYL, and AVALTTAALTLLLGIGSGIVL.

Belongs to the complex I subunit 2 family. NDH-1 is composed of 14 different subunits. Subunits NuoA, H, J, K, L, M, N constitute the membrane sector of the complex.

It localises to the cell membrane. It carries out the reaction a quinone + NADH + 5 H(+)(in) = a quinol + NAD(+) + 4 H(+)(out). Functionally, NDH-1 shuttles electrons from NADH, via FMN and iron-sulfur (Fe-S) centers, to quinones in the respiratory chain. The immediate electron acceptor for the enzyme in this species is believed to be a menaquinone. Couples the redox reaction to proton translocation (for every two electrons transferred, four hydrogen ions are translocated across the cytoplasmic membrane), and thus conserves the redox energy in a proton gradient. The sequence is that of NADH-quinone oxidoreductase subunit N 1 from Streptomyces griseus subsp. griseus (strain JCM 4626 / CBS 651.72 / NBRC 13350 / KCC S-0626 / ISP 5235).